Reading from the N-terminus, the 134-residue chain is MGKDTIADIITSIRNADMNRKGTVRIRSTNITESIVKILLREGFIENVRKHRENNQYFLILTLRHKRNKKESYKTILNLKRISRPGLRIYSNSQRIPRILGGIGIVILSTSQGIMTDREARRKSIGGEILCYIW.

This sequence belongs to the universal ribosomal protein uS8 family. In terms of assembly, part of the 30S ribosomal subunit.

It localises to the plastid. It is found in the chloroplast. Its function is as follows. One of the primary rRNA binding proteins, it binds directly to 16S rRNA central domain where it helps coordinate assembly of the platform of the 30S subunit. The protein is Small ribosomal subunit protein uS8c (rps8) of Lepidium virginicum (Virginia pepperweed).